Reading from the N-terminus, the 279-residue chain is Zinc-finger homeodomain protein 1 (279 aa).

A compositionally biased stretch (acidic residues) spans 1-30; it reads MEFEDNNNNNDEEQEEDMNLHEEEEDDDAV. Positions 1–62 are disordered; that stretch reads MEFEDNNNNN…TTSTGGGGGF (62 aa). The ZF-HD dimerization-type zinc-finger motif lies at 75–124; sequence FRECLKNQAVNIGGHAVDGCGEFMPAGIEGTIDALKCAACGCHRNFHRKE. Disordered regions lie at residues 128-199 and 245-279; these read FHHA…TKFT and NNKH…QDQP. Pro residues predominate over residues 134-143; sequence QHQPPPPPPG. The segment at residues 191–254 is a DNA-binding region (homeobox; atypical); sequence RKRHRTKFTA…NNKHTLGKSP (64 aa).

As to quaternary structure, homo- and heterodimer with other ZFHD proteins. Interacts with MIF1 and MIF2; these interactions prevent nuclear localization and DNA-binding to inhibit transcription regulation activity. Binds to ZHD2, ZHD3, ZHD4, ZHD5, ZHD6, ZHD7, ZHD8, ZHD9, ZHD10 and ZHD11. In terms of tissue distribution, mostly expressed in flowers and inflorescence.

The protein localises to the nucleus. Functionally, putative transcription factor. The sequence is that of Zinc-finger homeodomain protein 1 (ZHD1) from Arabidopsis thaliana (Mouse-ear cress).